The primary structure comprises 101 residues: Pterin-4-alpha-carbinolamine dehydratase (101 aa).

It belongs to the pterin-4-alpha-carbinolamine dehydratase family.

It carries out the reaction (4aS,6R)-4a-hydroxy-L-erythro-5,6,7,8-tetrahydrobiopterin = (6R)-L-erythro-6,7-dihydrobiopterin + H2O. This Drosophila virilis (Fruit fly) protein is Pterin-4-alpha-carbinolamine dehydratase (Pcd).